Here is a 388-residue protein sequence, read N- to C-terminus: LL-diaminopimelate aminotransferase (388 aa).

Residues tyrosine 16 and glycine 41 each contribute to the substrate site. Pyridoxal 5'-phosphate is bound by residues tyrosine 70, 104-105 (SK), tyrosine 129, asparagine 179, tyrosine 210, and 239-241 (SLS). Lysine 105, tyrosine 129, and asparagine 179 together coordinate substrate. The residue at position 242 (lysine 242) is an N6-(pyridoxal phosphate)lysine. Position 250 (arginine 250) interacts with pyridoxal 5'-phosphate. A substrate-binding site is contributed by arginine 368.

The protein belongs to the class-I pyridoxal-phosphate-dependent aminotransferase family. LL-diaminopimelate aminotransferase subfamily. In terms of assembly, homodimer. Pyridoxal 5'-phosphate serves as cofactor.

It catalyses the reaction (2S,6S)-2,6-diaminopimelate + 2-oxoglutarate = (S)-2,3,4,5-tetrahydrodipicolinate + L-glutamate + H2O + H(+). The protein operates within amino-acid biosynthesis; L-lysine biosynthesis via DAP pathway; LL-2,6-diaminopimelate from (S)-tetrahydrodipicolinate (aminotransferase route): step 1/1. In terms of biological role, involved in the synthesis of meso-diaminopimelate (m-DAP or DL-DAP), required for both lysine and peptidoglycan biosynthesis. Catalyzes the direct conversion of tetrahydrodipicolinate to LL-diaminopimelate. The sequence is that of LL-diaminopimelate aminotransferase from Maridesulfovibrio salexigens (strain ATCC 14822 / DSM 2638 / NCIMB 8403 / VKM B-1763) (Desulfovibrio salexigens).